The following is a 208-amino-acid chain: Na(+)-translocating NADH-quinone reductase subunit D (208 aa).

Helical transmembrane passes span 42 to 62 (IVMTFAVIFVTAFSNLFISLI), 70 to 90 (VRIIVQMAIIASLVILVDQIL), 103 to 123 (VFVGLIITNCIVMGRAEAFAM), 131 to 151 (FVDGIGNGLGYGAILVSVAFI), and 178 to 198 (NGLFLLAPSAFFIIGFIIWGI).

The protein belongs to the NqrDE/RnfAE family. As to quaternary structure, composed of six subunits; NqrA, NqrB, NqrC, NqrD, NqrE and NqrF.

Its subcellular location is the cell inner membrane. It carries out the reaction a ubiquinone + n Na(+)(in) + NADH + H(+) = a ubiquinol + n Na(+)(out) + NAD(+). NQR complex catalyzes the reduction of ubiquinone-1 to ubiquinol by two successive reactions, coupled with the transport of Na(+) ions from the cytoplasm to the periplasm. NqrA to NqrE are probably involved in the second step, the conversion of ubisemiquinone to ubiquinol. In Pasteurella multocida (strain Pm70), this protein is Na(+)-translocating NADH-quinone reductase subunit D.